Here is a 294-residue protein sequence, read N- to C-terminus: Equatorin (294 aa).

An N-terminal signal peptide occupies residues 1-14; that stretch reads MNFILFIFIPGVFS. Topologically, residues 15–181 are vesicular; sequence LKSSTLKPTI…QPDLEDLKIK (167 aa). N-linked (GlcNAc...) asparagine glycosylation is present at N76. The tract at residues 107–126 is disordered; sequence KSTIEEETTTSEPSHKNIQR. The N-linked (GlcNAc...) asparagine glycan is linked to N143. A helical membrane pass occupies residues 182 to 202; sequence IMLGISLMTLLLFVVLLAFCS. Topologically, residues 203–294 are cytoplasmic; it reads ATLYKLRHLS…MHENDESVTR (92 aa).

As to quaternary structure, interacts with SNAP25. Post-translationally, highly N- and O-glycosylated; contains sialic acid. In terms of tissue distribution, isoform 1 is highly expressed in testis. Isoform 2 is expressed at low levels in skin and blood.

The protein localises to the cytoplasmic vesicle. Its subcellular location is the secretory vesicle. The protein resides in the acrosome membrane. It is found in the acrosome inner membrane. It localises to the acrosome outer membrane. Acrosomal membrane-anchored protein involved in the process of fertilization and in acrosome biogenesis. The chain is Equatorin (EQTN) from Homo sapiens (Human).